The primary structure comprises 233 residues: 28 kDa ribonucleoprotein, chloroplastic (233 aa).

Residues 1-16 (CVAQTSEWEQEGSTNA) show a composition bias toward polar residues. The segment at 1-52 (CVAQTSEWEQEGSTNAVLEGESDPEGAVSWGSETQVSDEGGVEGGQGFSEPP) is disordered. 2 consecutive RRM domains span residues 55-133 (AKLF…KAAP) and 149-227 (CRVY…VAEE).

The protein localises to the plastid. Its subcellular location is the chloroplast. In terms of biological role, probably involved in the 3'-end processing of chloroplast mRNA's. In Spinacia oleracea (Spinach), this protein is 28 kDa ribonucleoprotein, chloroplastic.